The following is a 151-amino-acid chain: Large ribosomal subunit protein uL13 (151 aa).

Positions 126 to 151 are disordered; the sequence is YPGSNHPHEAQKPEKLTIQTIPGGER. Positions 131–140 are enriched in basic and acidic residues; it reads HPHEAQKPEK.

The protein belongs to the universal ribosomal protein uL13 family. Part of the 50S ribosomal subunit.

In terms of biological role, this protein is one of the early assembly proteins of the 50S ribosomal subunit, although it is not seen to bind rRNA by itself. It is important during the early stages of 50S assembly. The sequence is that of Large ribosomal subunit protein uL13 from Trichodesmium erythraeum (strain IMS101).